We begin with the raw amino-acid sequence, 558 residues long: MFTIALAQLNPTIGAIAENAEKIVTAALQAQARGADLLLTPELALCGYPPKDLLLNPSFVEQLEEELQWLAEKMPPSIAILVGTVTPHHQAERQGQKKLWNSAVLIEQGQIKQWFHKCLLPTYDVFDEDRYFASAAKSEYFIYKNVKIGVTICEDLWNDEAFWGQKFYQVNPLMDLIDQGVNLVVNLSASPYSCGKHYLRESLISHSAKRFNVPLIYVNQVGGNDDLIFDGGSFAVNSQGKIIGRSPLFQEDLALLSYDLSSGELTGQKLASLPMVDTEELWQALVLGVGDYLHKCGFSKAILGLSGGIDSSLVAAIAVEALGKENVLGILMPSPYSSDHSIQDALALAKNLGMNTQTIPIGPIMATYDQALVPLFQDAPFGLAEENLQSRIRGNLLMAIANKFGHLLLSTGNKSELAVGYCTLYGDMNGGLAAIADVPKTQVFELCRWLNREQTIIPPSVLTKPPSAELKPGQVDTDSLPPYDVLDGILGRLVEKHQSPQEIINAGFEREVVLKICQLVQKSEFKRRQAAPGLKVTDRAFGSGWRMPIAQAFHPQGS.

The 261-residue stretch at 2–262 (FTIALAQLNP…LALLSYDLSS (261 aa)) folds into the CN hydrolase domain. Residue glutamate 42 is the Proton acceptor; for glutaminase activity of the active site. Catalysis depends on lysine 117, which acts as the For glutaminase activity. Position 123 (tyrosine 123) interacts with L-glutamine. The active-site Nucleophile; for glutaminase activity is cysteine 153. The L-glutamine site is built by serine 190 and lysine 196. Residues 284 to 558 (ALVLGVGDYL…IAQAFHPQGS (275 aa)) form a ligase region. Residue 304 to 311 (GLSGGIDS) coordinates ATP. Asparagine 387 contacts deamido-NAD(+). Threonine 411 lines the ATP pocket. Residues glutamate 416 and lysine 526 each coordinate deamido-NAD(+).

It in the C-terminal section; belongs to the NAD synthetase family.

The enzyme catalyses deamido-NAD(+) + L-glutamine + ATP + H2O = L-glutamate + AMP + diphosphate + NAD(+) + H(+). Its pathway is cofactor biosynthesis; NAD(+) biosynthesis; NAD(+) from deamido-NAD(+) (L-Gln route): step 1/1. Its function is as follows. Catalyzes the ATP-dependent amidation of deamido-NAD to form NAD. Uses L-glutamine as a nitrogen source. This Synechocystis sp. (strain ATCC 27184 / PCC 6803 / Kazusa) protein is Glutamine-dependent NAD(+) synthetase.